Here is a 657-residue protein sequence, read N- to C-terminus: Transketolase (657 aa).

His31 contacts substrate. Thiamine diphosphate contacts are provided by residues His71 and 120–122 (GPL). Asp158 lines the Mg(2+) pocket. Gly159 and Asn188 together coordinate thiamine diphosphate. Asn188 and Ile190 together coordinate Mg(2+). Substrate contacts are provided by His262, Arg354, and Ser381. His262 is a thiamine diphosphate binding site. Catalysis depends on Glu408, which acts as the Proton donor. Position 434 (Phe434) interacts with thiamine diphosphate. His458, Asp466, and Arg517 together coordinate substrate.

This sequence belongs to the transketolase family. As to quaternary structure, homodimer. The cofactor is Mg(2+). Ca(2+) is required as a cofactor. It depends on Mn(2+) as a cofactor. Co(2+) serves as cofactor. Requires thiamine diphosphate as cofactor.

It carries out the reaction D-sedoheptulose 7-phosphate + D-glyceraldehyde 3-phosphate = aldehydo-D-ribose 5-phosphate + D-xylulose 5-phosphate. It functions in the pathway carbohydrate biosynthesis; Calvin cycle. The protein operates within carbohydrate degradation; pentose phosphate pathway. In terms of biological role, catalyzes the transfer of a two-carbon ketol group from a ketose donor to an aldose acceptor, via a covalent intermediate with the cofactor thiamine pyrophosphate. This is Transketolase (tklB) from Cereibacter sphaeroides (Rhodobacter sphaeroides).